A 684-amino-acid chain; its full sequence is Actin-related protein 5 (684 aa).

Residues 262–469 (KEKSVIIQLP…ARQKQKQKAN (208 aa)) adopt a coiled-coil conformation. 2 disordered regions span residues 392–443 (KEKK…PEHY) and 481–500 (VNPT…EDPE). Over residues 402 to 443 (SMKDGRLAQKRKRDEEKEKEKEKEEERDRQEEESFLKDPEHY) the composition is skewed to basic and acidic residues.

It belongs to the actin family. ARP5 subfamily. Component of the chromatin-remodeling Ino80 complex.

The protein localises to the nucleus. Proposed core component of the chromatin remodeling Ino80 complex which is involved in transcriptional regulation, DNA replication and probably DNA repair. The polypeptide is Actin-related protein 5 (arpE) (Dictyostelium discoideum (Social amoeba)).